Reading from the N-terminus, the 426-residue chain is Kynureninase (426 aa).

Pyridoxal 5'-phosphate contacts are provided by residues leucine 110, serine 111, 138 to 141 (FPSD), aspartate 223, histidine 226, and tyrosine 248. Lysine 249 bears the N6-(pyridoxal phosphate)lysine mark. Pyridoxal 5'-phosphate is bound by residues tryptophan 279 and asparagine 307.

The protein belongs to the kynureninase family. As to quaternary structure, homodimer. The cofactor is pyridoxal 5'-phosphate.

The enzyme catalyses L-kynurenine + H2O = anthranilate + L-alanine + H(+). It catalyses the reaction 3-hydroxy-L-kynurenine + H2O = 3-hydroxyanthranilate + L-alanine + H(+). It functions in the pathway amino-acid degradation; L-kynurenine degradation; L-alanine and anthranilate from L-kynurenine: step 1/1. It participates in cofactor biosynthesis; NAD(+) biosynthesis; quinolinate from L-kynurenine: step 2/3. Its function is as follows. Catalyzes the cleavage of L-kynurenine (L-Kyn) and L-3-hydroxykynurenine (L-3OHKyn) into anthranilic acid (AA) and 3-hydroxyanthranilic acid (3-OHAA), respectively. In Myxococcus xanthus (strain DK1622), this protein is Kynureninase.